Here is a 621-residue protein sequence, read N- to C-terminus: Chaperone protein HtpG (621 aa).

The tract at residues 1 to 328 (MKQEKKKFDA…SEDLPLNISR (328 aa)) is a; substrate-binding. The interval 329–544 (ESLQHNNVLE…EAAMDIRMER (216 aa)) is b. The interval 479–498 (VDQATSSSEEKNKDDKKSDD) is disordered. Basic and acidic residues predominate over residues 486 to 498 (SEEKNKDDKKSDD). The tract at residues 545–621 (FLIEQKQIAN…LNDIVQKAIL (77 aa)) is c.

The protein belongs to the heat shock protein 90 family. In terms of assembly, homodimer.

It localises to the cytoplasm. Molecular chaperone. Has ATPase activity. The protein is Chaperone protein HtpG of Rickettsia bellii (strain OSU 85-389).